A 700-amino-acid polypeptide reads, in one-letter code: MCEENENKDSEYIETTPVENGYNSERFKHLWFLCENCETLIYKKSLLEQKGVCAECGATLQMTSSERIELLIDNGTWRSINTKLSSIDVLEKKHTTFDIKMVRKVSILLYKVISGKYFYKEFFKNKYYNKALRILVAYNNTLVNILKVALGSKFIKYLNLDSKETIKILQDIIDTGLKTAQFALFEIRKKIKNEFYRFALLNKAFENKQISSLLAQNLEDRRDDESEIISIEFDRMAFRVQTFLILESLLKLNTQLADVKEQLLSQDKFLKAVATSLVKKELYFPEDKRKTRKIKKIFPFYPGTDPETDYFLWLRTHMAISLMERYLVLKEFKYWFRNRYCGLLEEEFPRFGSDILIEYVKKQDRYESYNMIDHIMQDDLHTSTNSVELFQQINLLFHHKNNEKDCDNNFLSYTENTKGIYFCLLEIMKQFSTLTLDSKDKFPKKKGRDTKDTEDIEDIDEEDIEEEYPLTYDSLTKEEKEYVDANIELIKSTFNLGKEEFIETEEQSYQDYNTSYQKETGLPDAIQTGVGEINGISVALGVMDFQFMGGSMGSVVGEKITRLIQFATENFLPLILVCASGGARMQEGSFSLMQMNKIAAMLHTYQKEKNLLYISVLTSPTTGGVTASFGMLANVTIVEPNAYIAFAGKRVIEQTLNQIVDDEDQISDSLFDFGMFDSMVPRALLKNVLSETIEIYMYGD.

Positions 34, 37, 53, and 56 each coordinate Zn(2+). The C4-type zinc-finger motif lies at 34–56; it reads CENCETLIYKKSLLEQKGVCAEC. Positions 445–700 constitute a CoA carboxyltransferase N-terminal domain; it reads KKGRDTKDTE…ETIEIYMYGD (256 aa).

The protein belongs to the AccD/PCCB family. In terms of assembly, acetyl-CoA carboxylase is a heterohexamer composed of biotin carboxyl carrier protein, biotin carboxylase and 2 subunits each of ACCase subunit alpha and ACCase plastid-coded subunit beta (accD). Zn(2+) serves as cofactor.

Its subcellular location is the plastid. It is found in the chloroplast stroma. It carries out the reaction N(6)-carboxybiotinyl-L-lysyl-[protein] + acetyl-CoA = N(6)-biotinyl-L-lysyl-[protein] + malonyl-CoA. Its pathway is lipid metabolism; malonyl-CoA biosynthesis; malonyl-CoA from acetyl-CoA: step 1/1. Its function is as follows. Component of the acetyl coenzyme A carboxylase (ACC) complex. Biotin carboxylase (BC) catalyzes the carboxylation of biotin on its carrier protein (BCCP) and then the CO(2) group is transferred by the transcarboxylase to acetyl-CoA to form malonyl-CoA. This chain is Acetyl-coenzyme A carboxylase carboxyl transferase subunit beta, chloroplastic, found in Cryptomeria japonica (Japanese cedar).